The primary structure comprises 1010 residues: BrkA autotransporter (1010 aa).

Residues methionine 1–alanine 42 form the signal peptide. The 269-residue stretch at leucine 742–phenylalanine 1010 folds into the Autotransporter domain.

The protein resides in the periplasm. It localises to the secreted. It is found in the cell surface. The protein localises to the cell outer membrane. Functionally, inhibits the classical pathway of complement activation and prevents accumulation of deposited C4. This is BrkA autotransporter from Bordetella pertussis (strain Tohama I / ATCC BAA-589 / NCTC 13251).